Here is a 243-residue protein sequence, read N- to C-terminus: UPF0758 protein alr2351 (243 aa).

The 123-residue stretch at 113–235 (PIDSPVAAVA…HQSLREITTL (123 aa)) folds into the MPN domain. Zn(2+) is bound by residues H184, H186, and D197. The JAMM motif signature appears at 184-197 (HNHPSGNVEPSPED).

Belongs to the UPF0758 family.

The polypeptide is UPF0758 protein alr2351 (Nostoc sp. (strain PCC 7120 / SAG 25.82 / UTEX 2576)).